A 239-amino-acid polypeptide reads, in one-letter code: Pyridoxine 5'-phosphate synthase (239 aa).

Asn9 is a binding site for 3-amino-2-oxopropyl phosphate. Position 11-12 (11-12 (DH)) interacts with 1-deoxy-D-xylulose 5-phosphate. Residue Arg20 coordinates 3-amino-2-oxopropyl phosphate. His45 functions as the Proton acceptor in the catalytic mechanism. Residues Arg47 and His52 each coordinate 1-deoxy-D-xylulose 5-phosphate. Glu72 serves as the catalytic Proton acceptor. Thr102 lines the 1-deoxy-D-xylulose 5-phosphate pocket. His189 (proton donor) is an active-site residue. 3-amino-2-oxopropyl phosphate contacts are provided by residues Gly190 and 211-212 (GH).

Belongs to the PNP synthase family. As to quaternary structure, homooctamer; tetramer of dimers.

The protein localises to the cytoplasm. It carries out the reaction 3-amino-2-oxopropyl phosphate + 1-deoxy-D-xylulose 5-phosphate = pyridoxine 5'-phosphate + phosphate + 2 H2O + H(+). Its pathway is cofactor biosynthesis; pyridoxine 5'-phosphate biosynthesis; pyridoxine 5'-phosphate from D-erythrose 4-phosphate: step 5/5. Its function is as follows. Catalyzes the complicated ring closure reaction between the two acyclic compounds 1-deoxy-D-xylulose-5-phosphate (DXP) and 3-amino-2-oxopropyl phosphate (1-amino-acetone-3-phosphate or AAP) to form pyridoxine 5'-phosphate (PNP) and inorganic phosphate. In Ehrlichia chaffeensis (strain ATCC CRL-10679 / Arkansas), this protein is Pyridoxine 5'-phosphate synthase.